Consider the following 126-residue polypeptide: Glycine cleavage system H protein (126 aa).

In terms of domain architecture, Lipoyl-binding spans 23 to 105; it reads AATVGITDHA…YGEGWLLRVR (83 aa). Lysine 64 carries the post-translational modification N6-lipoyllysine.

This sequence belongs to the GcvH family. In terms of assembly, the glycine cleavage system is composed of four proteins: P, T, L and H. Requires (R)-lipoate as cofactor.

In terms of biological role, the glycine cleavage system catalyzes the degradation of glycine. The H protein shuttles the methylamine group of glycine from the P protein to the T protein. The sequence is that of Glycine cleavage system H protein from Rubrobacter xylanophilus (strain DSM 9941 / JCM 11954 / NBRC 16129 / PRD-1).